The sequence spans 492 residues: Myocyte-specific enhancer factor 2A (492 aa).

One can recognise an MADS-box domain in the interval 3-57 (RKKIQITRIMDERNRQVTFTKRKFGLMKKAYELSVLCDCEIALIIFNSSNKLFQY). The segment at residues 58–86 (ASTDMDKVLLKYTEYNEPHESRTNSDIVE) is a DNA-binding region (mef2-type). A Phosphoserine; by CK2 modification is found at Ser59. At Ser98 the chain carries Phosphoserine. Positions 183 to 227 (PQATLHRNVSPGAPQRPPSTGSAGGMLSTSDLTVPNGAGSSPVGN) are disordered. Polar residues predominate over residues 209–227 (LSTSDLTVPNGAGSSPVGN). The residue at position 235 (Ser235) is a Phosphoserine. Positions 242-270 (TGANSLGKVMPTKSPPPPGGGSLGMNSRK) are disordered. Lys249 carries the post-translational modification N6-acetyllysine. At Ser255 the chain carries Phosphoserine. The required for interaction with MAPKs stretch occupies residues 266–283 (MNSRKPDLRVVIPPSSKG). Thr304 and Thr311 each carry phosphothreonine; by MAPK7 and MAPK14. Phosphoserine; by MAPK7 is present on Ser347. The segment covering 382-394 (SNLSINTNQNINI) has biased composition (polar residues). Residues 382-492 (SNLSINTNQN…KRMRMDAWVT (111 aa)) form a disordered region. Lys395 is subject to N6-acetyllysine; alternate. Residue Lys395 forms a Glycyl lysine isopeptide (Lys-Gly) (interchain with G-Cter in SUMO); alternate linkage. Phosphoserine; by CDK5 is present on Ser400. Position 407 is a phosphothreonine (Thr407). The span at 417–430 (PQPPPPPPQAPQPQ) shows a compositional bias: pro residues. Ser438 is modified (phosphoserine; by MAPK). The span at 438–451 (SPVDSLSSSSSSYD) shows a compositional bias: low complexity. 2 stretches are compositionally biased toward basic and acidic residues: residues 452-462 (GSDREDPRGDF) and 473-492 (NSED…AWVT).

As to quaternary structure, binds DNA as a homo- or heterodimer. Dimerizes with MEF2D. Interacts with HDAC7. Interacts with PIAS1; the interaction enhances sumoylation. Interacts with HDAC4, HDAC9 and SLC2A4RG. Interacts (via the N-terminal) with MAPK7; the interaction results in the phosphorylation and transcriptional activity of MEF2A. Post-translationally, constitutive phosphorylation on Ser-400 promotes Lys-395 sumoylation thus preventing acetylation at this site. Dephosphorylation on Ser-400 by PPP3CA upon neuron depolarization promotes a switch from sumoylation to acetylation on residue Lys-395 leading to inhibition of dendrite claw differentiation. Phosphorylation on Thr-304 and Thr-311 are the main sites involved in p38 MAPK signaling and activate transcription. Phosphorylated on these sites by MAPK14/p38alpha and MAPK11/p38beta, but not by MAPK13/p38delta nor by MAPK12/p38gamma. Phosphorylation on Ser-400 by CDK5 induced by neurotoxicity inhibits MEF2A transcriptional activation leading to apoptosis of cortical neurons. Phosphorylation on Thr-304, Thr-311 and Ser-347 can be induced by EGF. In terms of processing, sumoylation on Lys-395 is enhanced by PIAS1 and represses transcriptional activity. Phosphorylation on Ser-400 is required for sumoylation. Has no effect on nuclear location nor on DNA binding. Sumoylated with SUMO1 and, to a lesser extent with SUMO2 and SUMO3. PIASx facilitates sumoylation in postsynaptic dendrites in the cerebellar cortex and promotes their morphogenesis. Acetylation on Lys-395 activates transcriptional activity. Acetylated by p300 on several sites in diffentiating myocytes. Acetylation on Lys-4 increases DNA binding and transactivation. Hyperacetylation by p300 leads to enhanced cardiac myocyte growth and heart failure. Post-translationally, proteolytically cleaved in cerebellar granule neurons on several sites by caspase 3 and caspase 7 following neurotoxicity. Preferentially cleaves the CDK5-mediated hyperphosphorylated form which leads to neuron apoptosis and transcriptional inactivation.

The protein resides in the nucleus. Transcriptional activator which binds specifically to the MEF2 element, 5'-YTA[AT](4)TAR-3', found in numerous muscle-specific genes. Also involved in the activation of numerous growth factor- and stress-induced genes. Mediates cellular functions not only in skeletal and cardiac muscle development, but also in neuronal differentiation and survival. Plays diverse roles in the control of cell growth, survival and apoptosis via p38 MAPK signaling in muscle-specific and/or growth factor-related transcription. In cerebellar granule neurons, phosphorylated and sumoylated MEF2A represses transcription of NUR77 promoting synaptic differentiation. Associates with chromatin to the ZNF16 promoter. The chain is Myocyte-specific enhancer factor 2A (MEF2A) from Bos taurus (Bovine).